Reading from the N-terminus, the 257-residue chain is Protein patched homolog 1 (257 aa).

The Extracellular portion of the chain corresponds to 1–199 (AKLQTGTAYL…LDDILKSFSD (199 aa)). Residues Asn75, Asn114, and Asn177 are each glycosylated (N-linked (GlcNAc...) asparagine). The chain crosses the membrane as a helical span at residues 200–220 (ISVIRVASGYLLMLAYACLTM). In terms of domain architecture, SSD spans 201 to 257 (SVIRVASGYLLMLAYACLTMLRWDCAKSQGAVGLAGVLLVALSVAAGLGLCSLIGIS). At 221-235 (LRWDCAKSQGAVGLA) the chain is on the cytoplasmic side. The chain crosses the membrane as a helical span at residues 236–256 (GVLLVALSVAAGLGLCSLIGI).

It belongs to the patched family. In terms of processing, glycosylation is necessary for SHH binding. As to expression, in the eye, detected in neural retina, iris, retinal pigment epithelium, but not in lens.

The protein resides in the membrane. Functionally, acts as a receptor for sonic hedgehog (SHH), indian hedgehog (IHH) and desert hedgehog (DHH). Associates with the smoothened protein (SMO) to transduce the hedgehog's proteins signal. The chain is Protein patched homolog 1 (PTC1) from Cynops pyrrhogaster (Japanese fire-bellied newt).